The sequence spans 161 residues: Nucleotide-binding protein amb3630 (161 aa).

This sequence belongs to the YajQ family.

Its function is as follows. Nucleotide-binding protein. The sequence is that of Nucleotide-binding protein amb3630 from Paramagnetospirillum magneticum (strain ATCC 700264 / AMB-1) (Magnetospirillum magneticum).